A 371-amino-acid chain; its full sequence is Monomethylxanthine methyltransferase 2 (371 aa).

S-adenosyl-L-homocysteine contacts are provided by Tyr18, Cys61, Asn66, Asp100, Leu101, Ser139, Phe140, and Cys156. Theobromine-binding residues include Tyr157, His160, and Trp161. Asn178, Asp260, Phe262, and Asn263 together coordinate Mg(2+). Tyr355 serves as a coordination point for theobromine.

The protein belongs to the methyltransferase superfamily. Type-7 methyltransferase family. It depends on Mg(2+) as a cofactor.

It carries out the reaction 7-methylxanthine + S-adenosyl-L-methionine = theobromine + S-adenosyl-L-homocysteine + H(+). It functions in the pathway alkaloid biosynthesis. Functionally, involved in the biosynthesis of caffeine. Catalyzes the conversion of 7-methylxanthine (7mX) to theobromine and with a lower activity of paraxanthine to caffeine. The protein is Monomethylxanthine methyltransferase 2 of Coffea canephora (Robusta coffee).